A 488-amino-acid polypeptide reads, in one-letter code: Glutamyl-tRNA(Gln) amidotransferase subunit A (488 aa).

Residues Lys78 and Ser153 each act as charge relay system in the active site. The active-site Acyl-ester intermediate is Ser177.

The protein belongs to the amidase family. GatA subfamily. In terms of assembly, heterotrimer of A, B and C subunits.

It catalyses the reaction L-glutamyl-tRNA(Gln) + L-glutamine + ATP + H2O = L-glutaminyl-tRNA(Gln) + L-glutamate + ADP + phosphate + H(+). Its function is as follows. Allows the formation of correctly charged Gln-tRNA(Gln) through the transamidation of misacylated Glu-tRNA(Gln) in organisms which lack glutaminyl-tRNA synthetase. The reaction takes place in the presence of glutamine and ATP through an activated gamma-phospho-Glu-tRNA(Gln). This is Glutamyl-tRNA(Gln) amidotransferase subunit A from Caldanaerobacter subterraneus subsp. tengcongensis (strain DSM 15242 / JCM 11007 / NBRC 100824 / MB4) (Thermoanaerobacter tengcongensis).